The sequence spans 400 residues: MPMMWLFLTTACLIPGTLSAGGFLDFENKVNPEVWMNASEIIMYNGYPSEEYDVTTADGYILAINRIPHGRAQTGQTGPRPVVYMQHALFADNAYWLENFANGSLGFILADAGYDVWMGNSRGNTWSRRHKTLSANEEKFWAFSFNEMAKYDLPGIIDFIVNKTGQEKLYFIGHSLGTTIGFVAFSTMPELAQRIKMNFALGPVISFKYPTSVFTNLFLLPKSIIKLVFGTKGVLLEDKNARMSFITFCNQKLLQPLCSEFMSLWAGFNKKNMNMSRLDVYMAHAPTGSSIQNMLHIKQLYRSDEFRAYDWGSEAENMNHYNQSYPPLYDLTAMKVPTAIWAGGHDVLVTPQDVARILPQITNLRYFKQFPDWNHFDFVWGLDAPQRLYSKIISLMKEYF.

The signal sequence occupies residues 1-19; it reads MPMMWLFLTTACLIPGTLS. The region spanning 81–381 is the AB hydrolase-1 domain; that stretch reads PVVYMQHALF…DWNHFDFVWG (301 aa). The Nucleophile role is filled by serine 175. The cysteines at positions 249 and 258 are disulfide-linked. The N-linked (GlcNAc...) asparagine glycan is linked to asparagine 274. Active-site charge relay system residues include aspartate 346 and histidine 375.

Belongs to the AB hydrolase superfamily. Lipase family. Highly expressed in the epidermis. Also detected in other tissues, although at much lower levels, including liver and kidney.

Its subcellular location is the secreted. The catalysed reaction is a sterol ester + H2O = a sterol + a fatty acid + H(+). It catalyses the reaction a triacylglycerol + H2O = a 1,2-diacylglycerol + a fatty acid + H(+). The enzyme catalyses a triacylglycerol + H2O = a diacylglycerol + a fatty acid + H(+). It carries out the reaction a cholesterol ester + H2O = cholesterol + a fatty acid + H(+). Its function is as follows. Plays a highly specific role in the last step of keratinocyte differentiation. Contains two distinct domains: the alpha/beta hydrolase fold and the abhydrolase-associated lipase region, also features the consensus sequence of the active site of a genuine lipase. May have an essential function in lipid metabolism of the most differentiated epidermal layers. The chain is Lipase member N (Lipn) from Mus musculus (Mouse).